The following is a 547-amino-acid chain: Chaperonin GroEL 1 (547 aa).

ATP contacts are provided by residues 30 to 33, lysine 51, 87 to 91, glycine 415, and aspartate 496; these read TLGP and DGTTT.

It belongs to the chaperonin (HSP60) family. As to quaternary structure, forms a cylinder of 14 subunits composed of two heptameric rings stacked back-to-back. Interacts with the co-chaperonin GroES.

The protein localises to the cytoplasm. It carries out the reaction ATP + H2O + a folded polypeptide = ADP + phosphate + an unfolded polypeptide.. Functionally, together with its co-chaperonin GroES, plays an essential role in assisting protein folding. The GroEL-GroES system forms a nano-cage that allows encapsulation of the non-native substrate proteins and provides a physical environment optimized to promote and accelerate protein folding. This Rhodopseudomonas palustris (strain BisB18) protein is Chaperonin GroEL 1.